The chain runs to 252 residues: Trans-aconitate 2-methyltransferase (252 aa).

This sequence belongs to the methyltransferase superfamily. Tam family.

The protein localises to the cytoplasm. It carries out the reaction trans-aconitate + S-adenosyl-L-methionine = (E)-3-(methoxycarbonyl)pent-2-enedioate + S-adenosyl-L-homocysteine. In terms of biological role, catalyzes the S-adenosylmethionine monomethyl esterification of trans-aconitate. The polypeptide is Trans-aconitate 2-methyltransferase (Escherichia coli O6:H1 (strain CFT073 / ATCC 700928 / UPEC)).